We begin with the raw amino-acid sequence, 390 residues long: Phosphopentomutase (390 aa).

The Mn(2+) site is built by Asp-10, Asp-282, His-287, Asp-323, His-324, and His-335.

This sequence belongs to the phosphopentomutase family. The cofactor is Mn(2+).

It is found in the cytoplasm. The catalysed reaction is 2-deoxy-alpha-D-ribose 1-phosphate = 2-deoxy-D-ribose 5-phosphate. It carries out the reaction alpha-D-ribose 1-phosphate = D-ribose 5-phosphate. Its pathway is carbohydrate degradation; 2-deoxy-D-ribose 1-phosphate degradation; D-glyceraldehyde 3-phosphate and acetaldehyde from 2-deoxy-alpha-D-ribose 1-phosphate: step 1/2. Its function is as follows. Isomerase that catalyzes the conversion of deoxy-ribose 1-phosphate (dRib-1-P) and ribose 1-phosphate (Rib-1-P) to deoxy-ribose 5-phosphate (dRib-5-P) and ribose 5-phosphate (Rib-5-P), respectively. The polypeptide is Phosphopentomutase (Lachnoclostridium phytofermentans (strain ATCC 700394 / DSM 18823 / ISDg) (Clostridium phytofermentans)).